Consider the following 117-residue polypeptide: Photosystem II reaction center Psb28 protein (117 aa).

This sequence belongs to the Psb28 family. Part of the photosystem II complex.

It localises to the cellular thylakoid membrane. In Prochlorococcus marinus (strain MIT 9312), this protein is Photosystem II reaction center Psb28 protein.